A 324-amino-acid polypeptide reads, in one-letter code: NADH-ubiquinone oxidoreductase chain 1 (324 aa).

8 consecutive transmembrane segments (helical) span residues 10–30 (MIMT…LTLV), 76–96 (FLFI…WTPL), 107–127 (LGLL…LWSG), 143–163 (VAQT…TIML), 178–198 (PMYL…STLA), 229–249 (LFFL…ITLF), 260–280 (ELFS…FLWI), and 300–320 (FLPL…SYAG).

The protein belongs to the complex I subunit 1 family.

The protein localises to the mitochondrion inner membrane. It catalyses the reaction a ubiquinone + NADH + 5 H(+)(in) = a ubiquinol + NAD(+) + 4 H(+)(out). Its function is as follows. Core subunit of the mitochondrial membrane respiratory chain NADH dehydrogenase (Complex I) that is believed to belong to the minimal assembly required for catalysis. Complex I functions in the transfer of electrons from NADH to the respiratory chain. The immediate electron acceptor for the enzyme is believed to be ubiquinone. This Coturnix japonica (Japanese quail) protein is NADH-ubiquinone oxidoreductase chain 1 (MT-ND1).